Consider the following 215-residue polypeptide: N-(5'-phosphoribosyl)anthranilate isomerase (215 aa).

This sequence belongs to the TrpF family.

The catalysed reaction is N-(5-phospho-beta-D-ribosyl)anthranilate = 1-(2-carboxyphenylamino)-1-deoxy-D-ribulose 5-phosphate. The protein operates within amino-acid biosynthesis; L-tryptophan biosynthesis; L-tryptophan from chorismate: step 3/5. This is N-(5'-phosphoribosyl)anthranilate isomerase from Pelodictyon phaeoclathratiforme (strain DSM 5477 / BU-1).